The primary structure comprises 470 residues: MNPNQKIITIGSISLGLVVFNVLLHVVSIIVTVLVLGRGGKNRICNETVVREYNETVRIEKVTQWHNTNVIEYVPYWNEGTYMNNTEAICDVKGFAPFSKDNGIRIGSRGHVFVIREPFVSCSPTECRTFFLTQGSLLNDKHSNGTVKDRSPFRTLMSVEVGQPPNVYQARFEAVAWSATACHDGKKWMTIGVTGPDSKAIAVVHYGGVPTDVVNSWAGDILRTQESSCTCIQGDCYWVMTDGPANRQAQYRIYKANQGRIVGQTDVSLDGGHIEECSCYPNDGKVECVCRDNWTGTNRPVLVISPDLSYRVGYLCAGLPSDTPRGEDAQFIGSCTSPMGNKEYGVKGFGFRQGTDVWMGRTISRTSRSGFEILRVKNGWTQTSKEQVRKQVVVDNLNWSGYSGSFTLPVELSGKDCLVPCFWVEMIRGKPEEKTIWTSSSSIVMCGVNYEVADWSWHDGAILPFDIDKM.

Residues 1–14 lie on the Intravirion side of the membrane; that stretch reads MNPNQKIITIGSIS. An involved in apical transport and lipid raft association region spans residues 11–32; the sequence is GSISLGLVVFNVLLHVVSIIVT. The helical transmembrane segment at 15–35 threads the bilayer; sequence LGLVVFNVLLHVVSIIVTVLV. The tract at residues 32–86 is hypervariable stalk region; sequence TVLVLGRGGKNRICNETVVREYNETVRIEKVTQWHNTNVIEYVPYWNEGTYMNNT. Residues 36-470 are Virion surface-facing; the sequence is LGRGGKNRIC…AILPFDIDKM (435 aa). N-linked (GlcNAc...) asparagine; by host glycosylation is found at N46, N54, and N84. Positions 89 to 470 are head of neuraminidase; the sequence is ICDVKGFAPF…AILPFDIDKM (382 aa). 8 cysteine pairs are disulfide-bonded: C90-C417, C122-C127, C182-C229, C231-C236, C277-C290, C279-C288, C316-C335, and C421-C446. Residue R116 coordinates substrate. N144 carries N-linked (GlcNAc...) asparagine; by host glycosylation. Catalysis depends on D149, which acts as the Proton donor/acceptor. R150 serves as a coordination point for substrate. 275–276 is a binding site for substrate; the sequence is EE. Substrate is bound at residue R291. Residue D292 coordinates Ca(2+). N-linked (GlcNAc...) asparagine; by host glycosylation is present at N293. The Ca(2+) site is built by G296 and D322. Position 368 (R368) interacts with substrate. A glycan (N-linked (GlcNAc...) asparagine; by host) is linked at N398. Y402 (nucleophile) is an active-site residue.

The protein belongs to the glycosyl hydrolase 34 family. As to quaternary structure, homotetramer. Requires Ca(2+) as cofactor. N-glycosylated.

The protein localises to the virion membrane. It localises to the host apical cell membrane. The catalysed reaction is Hydrolysis of alpha-(2-&gt;3)-, alpha-(2-&gt;6)-, alpha-(2-&gt;8)- glycosidic linkages of terminal sialic acid residues in oligosaccharides, glycoproteins, glycolipids, colominic acid and synthetic substrates.. Inhibited by the neuraminidase inhibitors zanamivir (Relenza) and oseltamivir (Tamiflu). These drugs interfere with the release of progeny virus from infected cells and are effective against all influenza strains. Resistance to neuraminidase inhibitors is quite rare. Catalyzes the removal of terminal sialic acid residues from viral and cellular glycoconjugates. Cleaves off the terminal sialic acids on the glycosylated HA during virus budding to facilitate virus release. Additionally helps virus spread through the circulation by further removing sialic acids from the cell surface. These cleavages prevent self-aggregation and ensure the efficient spread of the progeny virus from cell to cell. Otherwise, infection would be limited to one round of replication. Described as a receptor-destroying enzyme because it cleaves a terminal sialic acid from the cellular receptors. May facilitate viral invasion of the upper airways by cleaving the sialic acid moieties on the mucin of the airway epithelial cells. Likely to plays a role in the budding process through its association with lipid rafts during intracellular transport. May additionally display a raft-association independent effect on budding. Plays a role in the determination of host range restriction on replication and virulence. Sialidase activity in late endosome/lysosome traffic seems to enhance virus replication. This chain is Neuraminidase, found in Influenza A virus (strain A/Equine/Jillin/1/1989 H3N8).